Consider the following 308-residue polypeptide: Mitochondrial import receptor subunit TOM40B (308 aa).

Residues 1–29 form a disordered region; it reads MGNTLGLAPMGALPRRSPRREEPLPNPGS. Residues 281–308 form a required for mitochondrial targeting region; sequence PLPVTLALGAFLNHWRNRFHCGFSITVG.

It belongs to the Tom40 family. As to quaternary structure, forms part of the preprotein translocase of the outer mitochondrial membrane (TOM complex) containing TOMM22, TOMM40, TOMM40L and TOMM70. Interacts with mitochondrial targeting sequences.

It is found in the mitochondrion outer membrane. Its function is as follows. Potential channel-forming protein implicated in import of protein precursors into mitochondria. The protein is Mitochondrial import receptor subunit TOM40B of Bos taurus (Bovine).